A 535-amino-acid polypeptide reads, in one-letter code: Sterol 26-hydroxylase, mitochondrial (535 aa).

A mitochondrion-targeting transit peptide spans 1–36; that stretch reads MAALGCARLRWALLGPRVAGCGLCPQGARAKAAIPT. K286 bears the N6-acetyllysine mark. Positions 387-401 are sterol-binding; sequence PLLKAVLKETLRLYP. C480 provides a ligand contact to heme. K524 carries the N6-acetyllysine modification.

The protein belongs to the cytochrome P450 family. Interacts with HSP70; this interaction is required for initial targeting to mitochondria. Heme is required as a cofactor. Expressed in all tissues tested. Highest expression in liver and duodenum, followed by adrenal gland and lung. Low expression in kidney and spleen.

The protein localises to the mitochondrion inner membrane. It carries out the reaction 5beta-cholestane-3alpha,7alpha,12alpha-triol + 6 reduced [adrenodoxin] + 3 O2 + 5 H(+) = (25R)-3alpha,7alpha,12alpha-trihydroxy-5beta-cholestan-26-oate + 6 oxidized [adrenodoxin] + 4 H2O. The enzyme catalyses cholestanol + 2 reduced [adrenodoxin] + O2 + 2 H(+) = (25R)-26-hydroxycholestanol + 2 oxidized [adrenodoxin] + H2O. The catalysed reaction is (25R)-3beta-hydroxycholest-5-en-7-one-26-al + 2 reduced [adrenodoxin] + O2 + H(+) = (25R)-3beta-hydroxycholest-5-en-7-one-26-oate + 2 oxidized [adrenodoxin] + H2O. It catalyses the reaction (25R)-3beta,26-dihydroxycholest-5-en-7-one + 2 reduced [adrenodoxin] + O2 + 2 H(+) = (25R)-3beta-hydroxycholest-5-en-7-one-26-al + 2 oxidized [adrenodoxin] + 2 H2O. It carries out the reaction 7-oxocholesterol + 2 reduced [adrenodoxin] + O2 + 2 H(+) = (25R)-3beta,26-dihydroxycholest-5-en-7-one + 2 oxidized [adrenodoxin] + H2O. The enzyme catalyses calciol + 2 reduced [adrenodoxin] + O2 + 2 H(+) = calcidiol + 2 oxidized [adrenodoxin] + H2O. The catalysed reaction is (25R)-5beta-cholestane-3alpha,7alpha,12alpha,26-tetrol + 2 reduced [adrenodoxin] + O2 + 2 H(+) = (25R)-3alpha,7alpha,12alpha-trihydroxy-5beta-cholestan-26-al + 2 oxidized [adrenodoxin] + 2 H2O. It catalyses the reaction 2 reduced [adrenodoxin] + cholesterol + O2 + 2 H(+) = (25R)-cholest-5-ene-3beta,26-diol + 2 oxidized [adrenodoxin] + H2O. It carries out the reaction (25R)-3beta,4beta-dihydroxycholest-5-en-26-al + 2 reduced [adrenodoxin] + O2 + H(+) = (25R)-3beta,4beta-dihydroxycholest-5-en-26-oate + 2 oxidized [adrenodoxin] + H2O. The enzyme catalyses (25R)-4beta,26-dihydroxycholesterol + 2 reduced [adrenodoxin] + O2 + 2 H(+) = (25R)-3beta,4beta-dihydroxycholest-5-en-26-al + 2 oxidized [adrenodoxin] + 2 H2O. The catalysed reaction is 4beta-hydroxycholesterol + 2 reduced [adrenodoxin] + O2 + 2 H(+) = (25R)-4beta,26-dihydroxycholesterol + 2 oxidized [adrenodoxin] + H2O. It catalyses the reaction (25R)-3beta-hydroxy-5-cholesten-26-al + 2 reduced [adrenodoxin] + O2 + H(+) = (25R)-3beta-hydroxy-5-cholestenoate + 2 oxidized [adrenodoxin] + H2O. It carries out the reaction (25R)-cholest-5-ene-3beta,26-diol + 2 reduced [adrenodoxin] + O2 + 2 H(+) = (25R)-3beta-hydroxy-5-cholesten-26-al + 2 oxidized [adrenodoxin] + 2 H2O. The enzyme catalyses (25R)-3alpha,7alpha,12alpha-trihydroxy-5beta-cholestan-26-al + 2 reduced [adrenodoxin] + O2 + H(+) = (25R)-3alpha,7alpha,12alpha-trihydroxy-5beta-cholestan-26-oate + 2 oxidized [adrenodoxin] + H2O. The catalysed reaction is 5beta-cholestane-3alpha,7alpha,12alpha-triol + 2 reduced [adrenodoxin] + O2 + 2 H(+) = (25R)-5beta-cholestane-3alpha,7alpha,12alpha,26-tetrol + 2 oxidized [adrenodoxin] + H2O. Its pathway is hormone biosynthesis; cholecalciferol biosynthesis. The protein operates within steroid metabolism; cholesterol degradation. It participates in lipid metabolism; bile acid biosynthesis. Its function is as follows. Cytochrome P450 monooxygenase that catalyzes regio- and stereospecific hydroxylation of cholesterol and its derivatives. Hydroxylates (with R stereochemistry) the terminal methyl group of cholesterol side-chain in a three step reaction to yield at first a C26 alcohol, then a C26 aldehyde and finally a C26 acid. Regulates cholesterol homeostasis by catalyzing the conversion of excess cholesterol to bile acids via both the 'neutral' (classic) and the 'acid' (alternative) pathways. May also regulate cholesterol homeostasis via generation of active oxysterols, which act as ligands for NR1H2 and NR1H3 nuclear receptors, modulating the transcription of genes involved in lipid metabolism. Plays a role in cholestanol metabolism in the cerebellum. Similarly to cholesterol, hydroxylates cholestanol and may facilitate sterol diffusion through the blood-brain barrier to the systemic circulation for further degradation. Also hydroxylates retinal 7-ketocholesterol, a noxious oxysterol with pro-inflammatory and pro-apoptotic effects, and may play a role in its elimination from the retinal pigment epithelium. May play a redundant role in vitamin D biosynthesis. Catalyzes 25-hydroxylation of vitamin D3 that is required for its conversion to a functionally active form. This Oryctolagus cuniculus (Rabbit) protein is Sterol 26-hydroxylase, mitochondrial (CYP27A1).